A 237-amino-acid chain; its full sequence is Eukaryotic translation initiation factor 3 subunit K (237 aa).

In terms of domain architecture, PCI spans 44–219; that stretch reads CDCNANRALL…EARKAEIRED (176 aa).

This sequence belongs to the eIF-3 subunit K family. Component of the eukaryotic translation initiation factor 3 (eIF-3) complex.

Its subcellular location is the cytoplasm. In terms of biological role, component of the eukaryotic translation initiation factor 3 (eIF-3) complex, which is involved in protein synthesis of a specialized repertoire of mRNAs and, together with other initiation factors, stimulates binding of mRNA and methionyl-tRNAi to the 40S ribosome. The eIF-3 complex specifically targets and initiates translation of a subset of mRNAs involved in cell proliferation. The chain is Eukaryotic translation initiation factor 3 subunit K from Neurospora crassa (strain ATCC 24698 / 74-OR23-1A / CBS 708.71 / DSM 1257 / FGSC 987).